Here is a 121-residue protein sequence, read N- to C-terminus: Protein CHLORORESPIRATORY REDUCTION 42, chloroplastic (121 aa).

In terms of assembly, biogenesis factor component of the plastidial NDH subcomplex A.

It localises to the plastid. Its subcellular location is the chloroplast. The protein resides in the chloroplast stroma. Its function is as follows. Required for both formation and activity of the chloroplast NAD(P)H dehydrogenase (NDH) complex of the photosynthetic electron transport chain. Functions in assembly or stabilization of the NDH complex; probably involved, together with CRR1 and CRR6, in the incorporation of NdhJ, NdhM, NdhK and NdhI into the NDH subcomplex A assembly intermediate (NAI500) to produce the complex NAI400. The protein is Protein CHLORORESPIRATORY REDUCTION 42, chloroplastic of Arabidopsis thaliana (Mouse-ear cress).